The following is a 448-amino-acid chain: Probable glycine dehydrogenase (decarboxylating) subunit 1 (448 aa).

It belongs to the GcvP family. N-terminal subunit subfamily. In terms of assembly, the glycine cleavage system is composed of four proteins: P, T, L and H. In this organism, the P 'protein' is a heterodimer of two subunits.

The catalysed reaction is N(6)-[(R)-lipoyl]-L-lysyl-[glycine-cleavage complex H protein] + glycine + H(+) = N(6)-[(R)-S(8)-aminomethyldihydrolipoyl]-L-lysyl-[glycine-cleavage complex H protein] + CO2. In terms of biological role, the glycine cleavage system catalyzes the degradation of glycine. The P protein binds the alpha-amino group of glycine through its pyridoxal phosphate cofactor; CO(2) is released and the remaining methylamine moiety is then transferred to the lipoamide cofactor of the H protein. The protein is Probable glycine dehydrogenase (decarboxylating) subunit 1 of Anoxybacillus flavithermus (strain DSM 21510 / WK1).